The following is a 673-amino-acid chain: Protein VirD3 (673 aa).

6 disordered regions span residues 36–73, 171–216, 229–409, 478–497, 520–552, and 585–673; these read VAGE…GRLG, SPVN…GTSV, ERDT…LRSS, RLNG…LEDF, EKGK…VTPL, and DSSR…GCGR. Composition is skewed to polar residues over residues 171-183, 193-216, 234-246, and 268-277; these read SPVN…SNWQ, VQPS…GTSV, SETT…TISS, and QSLSVTVTTP. A compositionally biased stretch (low complexity) spans 278–287; the sequence is NSNAEASSHS. Residues 288 to 303 show a composition bias toward basic and acidic residues; it reads AHTETLDDVSSDRSSE. 2 stretches are compositionally biased toward basic and acidic residues: residues 520-534 and 638-673; these read EKGK…DTRF and AAEH…GCGR.

In Agrobacterium fabrum (strain C58 / ATCC 33970) (Agrobacterium tumefaciens (strain C58)), this protein is Protein VirD3 (virD3).